Consider the following 400-residue polypeptide: MQLLHHAQLVTMDEESGGYGLIEQGALVIEAGRISWIGPETDLPAQYADATRRDLGGRLVTPGLIDCHTHIVFGGDRAREFEMRLEGASYEEIARAGGGILSSVRATREADEEALLAAALPRVDTLLAEGVTTLEIKSGYGLDIDSELKMLRVARRVGQLRKVTVRTTWLAAHALPPEYKDDRAGYIREVVIAGMERGHAEGLIDAVDGFCEGIAFTREEMAGIFDHAAKLGLPVKLHAEQLSDLGGAAMAARHGALSADHLEYLGQDGIEAMAASGTVAVLLPGAFYTLRETQYPPMAALRDAGVPIALATDCNPGTSPLTSLLLTMNMGATLFRMTPSECLAGVTRHAARALGLKDRGRLTPGMRADLAVWDIRHPAELTYRIGFNPLHARIVGGELV.

Residues His68 and His70 each contribute to the Fe(3+) site. Zn(2+)-binding residues include His68 and His70. 4-imidazolone-5-propanoate-binding residues include Arg77, Tyr140, and His173. Tyr140 provides a ligand contact to N-formimidoyl-L-glutamate. His238 lines the Fe(3+) pocket. His238 provides a ligand contact to Zn(2+). Position 241 (Gln241) interacts with 4-imidazolone-5-propanoate. Asp313 is a Fe(3+) binding site. Asp313 provides a ligand contact to Zn(2+). Positions 315 and 317 each coordinate N-formimidoyl-L-glutamate. 4-imidazolone-5-propanoate is bound at residue Thr318.

Belongs to the metallo-dependent hydrolases superfamily. HutI family. The cofactor is Zn(2+). Fe(3+) serves as cofactor.

Its subcellular location is the cytoplasm. The catalysed reaction is 4-imidazolone-5-propanoate + H2O = N-formimidoyl-L-glutamate. It functions in the pathway amino-acid degradation; L-histidine degradation into L-glutamate; N-formimidoyl-L-glutamate from L-histidine: step 3/3. Functionally, catalyzes the hydrolytic cleavage of the carbon-nitrogen bond in imidazolone-5-propanoate to yield N-formimidoyl-L-glutamate. It is the third step in the universal histidine degradation pathway. The sequence is that of Imidazolonepropionase from Paracoccus denitrificans (strain Pd 1222).